The following is a 408-amino-acid chain: Elongation factor Tu, chloroplastic (408 aa).

In terms of domain architecture, tr-type G spans 10–214 (KPHVNIGTIG…AVDSYIPTPK (205 aa)). The interval 19–26 (GHVDHGKT) is G1. 19–26 (GHVDHGKT) serves as a coordination point for GTP. A Mg(2+)-binding site is contributed by Thr26. Positions 60-64 (GITIN) are G2. Residues 81–84 (DCPG) are G3. GTP is bound by residues 81–85 (DCPGH) and 136–139 (NKED). Residues 136 to 139 (NKED) form a G4 region. Positions 174 to 176 (SAL) are G5.

This sequence belongs to the TRAFAC class translation factor GTPase superfamily. Classic translation factor GTPase family. EF-Tu/EF-1A subfamily.

It localises to the plastid. Its subcellular location is the chloroplast. The enzyme catalyses GTP + H2O = GDP + phosphate + H(+). GTP hydrolase that promotes the GTP-dependent binding of aminoacyl-tRNA to the A-site of ribosomes during protein biosynthesis. The chain is Elongation factor Tu, chloroplastic (tufA) from Chara connivens (Convergent stonewort).